Reading from the N-terminus, the 357-residue chain is Peptide chain release factor 1 (357 aa).

Glutamine 232 carries the post-translational modification N5-methylglutamine.

It belongs to the prokaryotic/mitochondrial release factor family. In terms of processing, methylated by PrmC. Methylation increases the termination efficiency of RF1.

Its subcellular location is the cytoplasm. In terms of biological role, peptide chain release factor 1 directs the termination of translation in response to the peptide chain termination codons UAG and UAA. The chain is Peptide chain release factor 1 from Oleidesulfovibrio alaskensis (strain ATCC BAA-1058 / DSM 17464 / G20) (Desulfovibrio alaskensis).